Reading from the N-terminus, the 118-residue chain is Non-specific lipid-transfer protein 1 (118 aa).

Residues 1 to 20 (MARLAVAIAVVAAVVVVLAA) form the signal peptide. Cystine bridges form between cysteine 29–cysteine 77, cysteine 39–cysteine 54, cysteine 55–cysteine 100, and cysteine 75–cysteine 114.

This sequence belongs to the plant LTP family.

In terms of biological role, plant non-specific lipid-transfer proteins transfer phospholipids as well as galactolipids across membranes. May play a role in wax or cutin deposition in the cell walls of expanding epidermal cells and certain secretory tissues. The polypeptide is Non-specific lipid-transfer protein 1 (LTP1) (Sorghum bicolor (Sorghum)).